The chain runs to 378 residues: Probable G-protein coupled receptor frpr-1 (378 aa).

7 consecutive transmembrane segments (helical) span residues Leu-47–Leu-67, Leu-85–Leu-105, Ala-120–Ile-140, Val-180–Pro-200, Thr-243–Ile-263, Ile-277–Val-297, and Ser-315–Phe-337.

Belongs to the G-protein coupled receptor 1 family.

Its subcellular location is the cell membrane. The polypeptide is Probable G-protein coupled receptor frpr-1 (Caenorhabditis elegans).